A 291-amino-acid chain; its full sequence is Maintenance of mitochondrial morphology protein 1 (291 aa).

The Lumenal segment spans residues 1–16 (MPNNYVFSLQPTFTQG). Residues 17 to 37 (LILGQLSILVLLGMILKFLFL) traverse the membrane as a helical segment. At 38 to 291 (DSTQHPFESS…KKEMSDADLS (254 aa)) the chain is on the cytoplasmic side. The SMP-LTD domain maps to 73–277 (NAESAEWFNV…LPGLASVVDV (205 aa)).

Belongs to the MMM1 family. Homodimer. Component of the ER-mitochondria encounter structure (ERMES) or MDM complex, composed of MMM1, MDM10, MDM12 and MDM34. An MMM1 homodimer associates with one molecule of MDM12 on each side in a pairwise head-to-tail manner, and the SMP-LTD domains of MMM1 and MDM12 generate a continuous hydrophobic tunnel for phospholipid trafficking.

It localises to the endoplasmic reticulum membrane. Its function is as follows. Component of the ERMES/MDM complex, which serves as a molecular tether to connect the endoplasmic reticulum (ER) and mitochondria. Components of this complex are involved in the control of mitochondrial shape and protein biogenesis, and function in nonvesicular lipid trafficking between the ER and mitochondria. The MDM12-MMM1 subcomplex functions in the major beta-barrel assembly pathway that is responsible for biogenesis of all outer membrane beta-barrel proteins, and acts in a late step after the SAM complex. The MDM10-MDM12-MMM1 subcomplex further acts in the TOM40-specific pathway after the action of the MDM12-MMM1 complex. Essential for establishing and maintaining the structure of mitochondria and maintenance of mtDNA nucleoids. This chain is Maintenance of mitochondrial morphology protein 1, found in Laccaria bicolor (strain S238N-H82 / ATCC MYA-4686) (Bicoloured deceiver).